We begin with the raw amino-acid sequence, 134 residues long: Thionin-2.2 (134 aa).

Residues 1 to 24 (MEGKTVISSLLIMSLVLAQIQVEA) form the signal peptide. 3 disulfide bridges follow: Cys27/Cys64, Cys28/Cys56, and Cys40/Cys50. A propeptide spans 71–134 (DILENSGDAV…GGSTAAVKSA (64 aa)) (acidic domain).

It belongs to the plant thionin (TC 1.C.44) family. Low basal expression in seedlings. Also detected in rosette leaves.

The protein localises to the secreted. In terms of biological role, thionins are small plant proteins which are toxic to animal cells. They seem to exert their toxic effect at the level of the cell membrane. Their precise function is not known. This Arabidopsis thaliana (Mouse-ear cress) protein is Thionin-2.2 (THI2.2).